The primary structure comprises 21 residues: Peptide PGLa-R6 (21 aa).

Position 21 is a leucine amide (Leu21).

In terms of tissue distribution, expressed by the skin glands.

Its subcellular location is the secreted. Its function is as follows. Antimicrobial peptide. In Xenopus ruwenzoriensis (Uganda clawed frog), this protein is Peptide PGLa-R6.